A 264-amino-acid polypeptide reads, in one-letter code: Thymidylate synthase (264 aa).

Residue Arg-21 participates in dUMP binding. His-51 is a binding site for (6R)-5,10-methylene-5,6,7,8-tetrahydrofolate. 126–127 serves as a coordination point for dUMP; it reads RR. Cys-146 (nucleophile) is an active-site residue. DUMP-binding positions include 166-169, Asn-177, and 207-209; these read RSAD and HIY. Asp-169 is a binding site for (6R)-5,10-methylene-5,6,7,8-tetrahydrofolate. Ala-263 lines the (6R)-5,10-methylene-5,6,7,8-tetrahydrofolate pocket.

This sequence belongs to the thymidylate synthase family. Bacterial-type ThyA subfamily. In terms of assembly, homodimer.

The protein resides in the cytoplasm. It catalyses the reaction dUMP + (6R)-5,10-methylene-5,6,7,8-tetrahydrofolate = 7,8-dihydrofolate + dTMP. Its pathway is pyrimidine metabolism; dTTP biosynthesis. Its function is as follows. Catalyzes the reductive methylation of 2'-deoxyuridine-5'-monophosphate (dUMP) to 2'-deoxythymidine-5'-monophosphate (dTMP) while utilizing 5,10-methylenetetrahydrofolate (mTHF) as the methyl donor and reductant in the reaction, yielding dihydrofolate (DHF) as a by-product. This enzymatic reaction provides an intracellular de novo source of dTMP, an essential precursor for DNA biosynthesis. The sequence is that of Thymidylate synthase from Brucella abortus (strain 2308).